Consider the following 165-residue polypeptide: 2S seed storage protein 5 (165 aa).

Positions 1–20 (MAKLILVFATLALFILLANA) are cleaved as a signal peptide. 2 consecutive propeptides follow at residues 21 to 37 (SIYRTVVEFEEDDDVSN) and 71 to 89 (YEADDFELTLDVDLEDDEN).

This sequence belongs to the 2S seed storage albumins family. As to quaternary structure, the mature protein consists of a small and a large chain linked by disulfide bonds.

In terms of biological role, this is a 2S seed storage protein. This is 2S seed storage protein 5 (SESA5) from Arabidopsis thaliana (Mouse-ear cress).